A 176-amino-acid polypeptide reads, in one-letter code: HTH-type transcriptional regulator DctR (176 aa).

The HTH luxR-type domain maps to valine 109–tyrosine 174. The segment at residues threonine 133–histidine 152 is a DNA-binding region (H-T-H motif).

Functionally, may act as a transcriptional regulator of dctA. Could be involved in the regulation of the genes coding for the type III secretion system in enterohaemorragic strains. This is HTH-type transcriptional regulator DctR (dctR) from Escherichia coli O157:H7.